A 354-amino-acid polypeptide reads, in one-letter code: Galactoside alpha-(1,2)-fucosyltransferase 2 (354 aa).

Topologically, residues 1-22 (MRFAPDYVLCPPTATRRLRATH) are cytoplasmic. Residues 23–43 (PSVSTIYFLFTIFVVSTVFHC) form a helical; Signal-anchor for type II membrane protein membrane-spanning segment. Over 44–354 (HQRLALVPAP…NMGRALWSGL (311 aa)) the chain is Lumenal. N-linked (GlcNAc...) asparagine glycosylation is found at Asn197, Asn291, and Asn317.

This sequence belongs to the glycosyltransferase 11 family. As to expression, salivary and lactating mammary glands.

Its subcellular location is the golgi apparatus. It localises to the golgi stack membrane. The catalysed reaction is a beta-D-galactosyl-(1-&gt;3)-N-acetyl-beta-D-glucosaminyl derivative + GDP-beta-L-fucose = an alpha-L-Fuc-(1-&gt;2)-beta-D-Gal-(1-&gt;3)-beta-D-GlcNAc derivative + GDP + H(+). It carries out the reaction a beta-D-galactosyl-(1-&gt;4)-N-acetyl-beta-D-glucosaminyl derivative + GDP-beta-L-fucose = an alpha-L-Fuc-(1-&gt;2)-beta-D-Gal-(1-&gt;4)-beta-D-GlcNAc derivative + GDP + H(+). It catalyses the reaction a neolactoside nLc4Cer + GDP-beta-L-fucose = a neolactoside IV(2)-alpha-Fuc-nLc4Cer + GDP + H(+). The enzyme catalyses a neolactoside nLc4Cer(d18:1(4E)) + GDP-beta-L-fucose = a neolactoside IV(2)-alpha-Fuc-nLc4Cer(d18:1(4E)) + GDP + H(+). The catalysed reaction is a ganglioside GM1 + GDP-beta-L-fucose = a ganglioside Fuc-GM1 + GDP + H(+). It carries out the reaction a ganglioside GA1 + GDP-beta-L-fucose = a ganglioside Fuc-GA1 + GDP + H(+). It catalyses the reaction Lc4Cer + GDP-beta-L-fucose = alpha-L-fucosyl-(1-&gt;2)-beta-D-galactosyl-(1-&gt;3)-N-acetyl-beta-D-glucosaminyl-(1-&gt;3)-beta-D-galactosyl-(1-&gt;4)-beta-D-glucosyl-(1&lt;-&gt;1')-ceramide + GDP + H(+). The enzyme catalyses a beta-D-Gal-(1-&gt;3)-beta-D-GlcNAc-(1-&gt;3)-beta-D-Gal-(1-&gt;4)-beta-D-Glc-(1&lt;-&gt;1')-Cer(d18:1(4E)) + GDP-beta-L-fucose = alpha-L-fucosyl-(1-&gt;2)- beta-D-galactosyl-(1-&gt;3)-N-acetyl-beta-D-glucosaminyl-(1-&gt;3)-beta-D-galactosyl-(1-&gt;4)-beta-D-glucosyl-(1&lt;-&gt;1')-N-acylsphing-4-enine + GDP + H(+). The catalysed reaction is a ganglioside GD1b + GDP-beta-L-fucose = a ganglioside Fuc-GD1b + GDP + H(+). It carries out the reaction a ganglioside GM1 (d18:1(4E)) + GDP-beta-L-fucose = a ganglioside Fuc-GM1 (d18:1(4E)) + GDP + H(+). It catalyses the reaction a globoside GalGb4Cer (d18:1(4E)) + GDP-beta-L-fucose = a globoside Globo-H (d18:1(4E)) + GDP + H(+). The enzyme catalyses a lactoside III(4)-a-Fuc-Lc4Cer + GDP-beta-L-fucose = a lactoside IV(2),III(4)-a-[Fuc]2-Lc4Cer + GDP + H(+). The catalysed reaction is beta-D-galactosyl-(1-&gt;3)-N-acetyl-D-galactosamine + GDP-beta-L-fucose = alpha-L-fucosyl-(1-&gt;2)-beta-D-galactosyl-(1-&gt;3)-N-acetyl-D-galactosamine + GDP + H(+). The protein operates within protein modification; protein glycosylation. Functionally, catalyzes the transfer of L-fucose, from a guanosine diphosphate-beta-L-fucose, to the terminal galactose on both O- and N-linked glycans chains of cell surface glycoproteins and glycolipids and the resulting epitope regulates several processes such as cell-cell interaction including host-microbe interaction, cell surface expression and cell proliferation. Preferentially fucosylates gangliosides GA1 and GM1 in the antrum, cecum and colon and in the female reproductive organs. Fucosylated host glycoproteins or glycolipids mediate interaction with intestinal microbiota influencing its composition. Creates a soluble precursor oligosaccharide FuC-alpha ((1,2)Galbeta-) called the H antigen which is an essential substrate for the final step in the soluble ABO blood group antigen synthesis pathway. This chain is Galactoside alpha-(1,2)-fucosyltransferase 2, found in Oryctolagus cuniculus (Rabbit).